The sequence spans 145 residues: MNLTNYVKQVSVEDFGWEFRHQAYWNKRLRTTGGRFFPKDGHLDFNPKIYETFGLEIFRKIVRHELAHYHLYYQGKGYRHGDRDFKELLKQVDGLRYAPSLSNSQSFLVYECLSCGALIRRRRRVNLQKYRCGRCMGKLRLSEKA.

In terms of domain architecture, SprT-like spans 5–141; it reads NYVKQVSVED…CGRCMGKLRL (137 aa). Residue histidine 64 participates in Zn(2+) binding. Glutamate 65 is a catalytic residue. Position 68 (histidine 68) interacts with Zn(2+).

The protein belongs to the SprT family. It depends on Zn(2+) as a cofactor.

Its subcellular location is the cytoplasm. The protein is Protein SprT-like of Streptococcus sanguinis (strain SK36).